The primary structure comprises 1417 residues: DExH-box ATP-dependent RNA helicase DExH4, chloroplastic (1417 aa).

The span at Met1–Gln12 shows a compositional bias: basic residues. The segment at Met1–Leu37 is disordered. Residues Met1 to Thr61 constitute a chloroplast transit peptide. One can recognise a Helicase ATP-binding domain in the interval Leu607 to Gln781. An ATP-binding site is contributed by Gly620–Thr627. Positions Asp722–His725 match the DEIH box motif. The Helicase C-terminal domain occupies Leu868–Gly1043.

The protein belongs to the DExH box helicase family.

The protein resides in the plastid. Its subcellular location is the chloroplast. It carries out the reaction ATP + H2O = ADP + phosphate + H(+). This chain is DExH-box ATP-dependent RNA helicase DExH4, chloroplastic, found in Arabidopsis thaliana (Mouse-ear cress).